Here is a 215-residue protein sequence, read N- to C-terminus: Adenylate kinase (215 aa).

Position 10-15 (10-15) interacts with ATP; sequence GAGKGT. The interval 30-59 is NMP; it reads STGDIFRKNISENTPLGMEARSYMDKGLLV. AMP contacts are provided by residues Thr-31, Arg-36, 57 to 59, 85 to 88, and Gln-92; these read LLV and GFPR. Positions 126-163 are LID; sequence GRRVCTSCGGSFHIKFNPPTIDGKCNLCGSDIVQRKDD. Arg-127 lines the ATP pocket. Zn(2+) contacts are provided by Cys-130 and Cys-133. ATP is bound at residue 136–137; the sequence is SF. Residues Cys-150 and Cys-153 each contribute to the Zn(2+) site. Arg-160 and Arg-171 together coordinate AMP. Residue Lys-199 participates in ATP binding.

Belongs to the adenylate kinase family. In terms of assembly, monomer.

It localises to the cytoplasm. It catalyses the reaction AMP + ATP = 2 ADP. It participates in purine metabolism; AMP biosynthesis via salvage pathway; AMP from ADP: step 1/1. Functionally, catalyzes the reversible transfer of the terminal phosphate group between ATP and AMP. Plays an important role in cellular energy homeostasis and in adenine nucleotide metabolism. The protein is Adenylate kinase of Clostridium botulinum (strain Eklund 17B / Type B).